The chain runs to 295 residues: Protoheme IX farnesyltransferase (295 aa).

9 helical membrane-spanning segments follow: residues 31–51, 54–74, 98–118, 121–141, 147–167, 173–193, 220–240, 245–265, and 273–293; these read GLVM…IGAA, VLTV…NCYL, FVAL…LSLA, GLTA…YTPM, TALF…WTSV, AGGL…FLAI, LWMA…VPLG, GYAI…ISGI, and ARTF…ALFL.

The protein belongs to the UbiA prenyltransferase family. Protoheme IX farnesyltransferase subfamily.

Its subcellular location is the cell inner membrane. The catalysed reaction is heme b + (2E,6E)-farnesyl diphosphate + H2O = Fe(II)-heme o + diphosphate. Its pathway is porphyrin-containing compound metabolism; heme O biosynthesis; heme O from protoheme: step 1/1. Converts heme B (protoheme IX) to heme O by substitution of the vinyl group on carbon 2 of heme B porphyrin ring with a hydroxyethyl farnesyl side group. The polypeptide is Protoheme IX farnesyltransferase (Anaeromyxobacter dehalogenans (strain 2CP-C)).